A 90-amino-acid polypeptide reads, in one-letter code: Progonadoliberin-3 (90 aa).

An N-terminal signal peptide occupies residues 1-23 (MEAGSRVIMQVLLLALVVQVTLS). Gln24 bears the Pyrrolidone carboxylic acid mark. Glycine amide is present on Gly33.

This sequence belongs to the GnRH family. In terms of tissue distribution, expressed only in the terminal nerve nucleus of the telencephalon.

It localises to the secreted. Stimulates the secretion of gonadotropins. The polypeptide is Progonadoliberin-3 (gnrh3) (Haplochromis burtoni (Burton's mouthbrooder)).